Here is a 332-residue protein sequence, read N- to C-terminus: Tsukubadiene synthase (332 aa).

Residues D75 and E80 each contribute to the Mg(2+) site. Residues 75–80 carry the DDXXXE motif motif; it reads DDHLDE. Residue R165 participates in substrate binding. S212, S216, and E220 together coordinate Mg(2+). The short motif at 212-220 is the SXXXSXXXE motif element; the sequence is SDLHSFQLE. 298 to 299 contributes to the substrate binding site; sequence RY.

The protein belongs to the terpene synthase family. Mg(2+) is required as a cofactor.

The catalysed reaction is (2E,6E,10E)-geranylgeranyl diphosphate = tsukubadiene + diphosphate. Functionally, catalyzes the formation of the 5-9-5 ring skeleton (3S,6S,11R,14S)-tsukubadiene from geranylgeranyl diphosphate (GGPP) via a 1,11-cyclization and a 10Re,14Re-cyclization. The sequence is that of Tsukubadiene synthase from Streptomyces tsukubensis (strain DSM 42081 / NBRC 108919 / NRRL 18488 / 9993).